Here is an 897-residue protein sequence, read N- to C-terminus: Protein transport protein SEC24-1 (897 aa).

Cys-213, Cys-216, Cys-235, and Cys-238 together coordinate Zn(2+). Positions 213 to 238 (CRRCRSYINPFAKFIEQGRRWRCNFC) are zinc finger-like.

Belongs to the SEC23/SEC24 family. SEC24 subfamily. As to quaternary structure, the COPII coat is composed of at least 5 proteins: the SEC23/24 complex, the SEC13/31 complex, and the protein SAR1. Golgi apparatus membrane; Peripheral membrane protein; Cytoplasmic side.

The protein resides in the cytoplasm. It localises to the cytoplasmic vesicle. Its subcellular location is the COPII-coated vesicle membrane. It is found in the endoplasmic reticulum membrane. The protein localises to the golgi apparatus membrane. Component of the coat protein complex II (COPII) which promotes the formation of transport vesicles from the endoplasmic reticulum (ER). The coat has two main functions, the physical deformation of the endoplasmic reticulum membrane into vesicles and the selection of cargo molecules. The polypeptide is Protein transport protein SEC24-1 (SEC241) (Candida glabrata (strain ATCC 2001 / BCRC 20586 / JCM 3761 / NBRC 0622 / NRRL Y-65 / CBS 138) (Yeast)).